Here is a 355-residue protein sequence, read N- to C-terminus: Type II restriction enzyme CfrBI (355 aa).

The enzyme catalyses Endonucleolytic cleavage of DNA to give specific double-stranded fragments with terminal 5'-phosphates.. A P subtype restriction enzyme that recognizes the double-stranded sequence 5'-CCWWGG-3' and cleaves after C-1. The protein is Type II restriction enzyme CfrBI of Citrobacter freundii.